The following is a 264-amino-acid chain: Stage IV sporulation protein FA (264 aa).

Residues 1–10 (MSHRADEIRK) are compositionally biased toward basic and acidic residues. The tract at residues 1–37 (MSHRADEIRKRLEKRRKQLSGSKRFSTQTVSEKQKPP) is disordered. At 1–72 (MSHRADEIRK…GKHPLVKTDS (72 aa)) the chain is on the mother cell cytoplasmic side. Positions 19 to 31 (LSGSKRFSTQTVS) are enriched in polar residues. Residues 73–90 (IILKCLLSACLVLVSAIA) traverse the membrane as a helical segment. Topologically, residues 91-264 (YKTNIGPVSQ…IDPIQVISFE (174 aa)) are forespore intermembrane space.

As to quaternary structure, forms a complex with BofA and SpoIVFB localized in the mother-cell membrane surrounding the forespore. Post-translationally, may be degraded by FtsH. It is stabilized by an ftsH disruption mutant, and in a probably independent fashion, by overexpression of BofA.

It is found in the forespore outer membrane. Functionally, implicated in the coupling of mother cell to forespore gene expression. Required for spore formation at 37 degrees Celsius, but not at 30 degrees Celsius. SpoIVFA plays a central role in both maintaining the SpoIVFA/BofA/SpoIVFB complex and anchoring it to the outer forespore membrane. SpoIVFA brings BofA into close proximity to SpoIVFB, allowing BofA to inhibit SpoIVFB. Increased accumulation of SpoIVFA seems to inhibit the activity of SpoIVFB and thus regulates the activation of sigma-K. The chain is Stage IV sporulation protein FA (spoIVFA) from Bacillus subtilis (strain 168).